The following is a 159-amino-acid chain: Phosphopantetheine adenylyltransferase (159 aa).

Residue serine 8 coordinates substrate. ATP-binding positions include 8–9 and histidine 16; that span reads SF. Lysine 40, valine 72, and arginine 86 together coordinate substrate. ATP is bound by residues 87–89, glutamate 97, and 122–128; these read GVR and YAALRSS.

It belongs to the bacterial CoaD family. As to quaternary structure, homohexamer. Mg(2+) is required as a cofactor.

The protein localises to the cytoplasm. It carries out the reaction (R)-4'-phosphopantetheine + ATP + H(+) = 3'-dephospho-CoA + diphosphate. It participates in cofactor biosynthesis; coenzyme A biosynthesis; CoA from (R)-pantothenate: step 4/5. Its function is as follows. Reversibly transfers an adenylyl group from ATP to 4'-phosphopantetheine, yielding dephospho-CoA (dPCoA) and pyrophosphate. This Treponema pallidum (strain Nichols) protein is Phosphopantetheine adenylyltransferase.